The following is a 66-amino-acid chain: Cold shock-like protein CspLA (66 aa).

The 60-residue stretch at 4-63 (GTVKWFNAEKGFGFIERENGDDVFVHFSAIQGDGFKSLDEGQAVTFDVEEGQRGPQAANV) folds into the CSD domain.

Homodimer.

The protein localises to the cytoplasm. In Listeria innocua serovar 6a (strain ATCC BAA-680 / CLIP 11262), this protein is Cold shock-like protein CspLA (cspLA).